Here is a 79-residue protein sequence, read N- to C-terminus: Conotoxin Leo-O4 (79 aa).

An N-terminal signal peptide occupies residues 1–22 (MKLTCMMLVAVLFLTAWTFVTA). A propeptide spanning residues 23–51 (NVSRNGLENLFPEERHEMMNPNAAKLNNR) is cleaved from the precursor. Disulfide bonds link C53-C70, C60-C74, and C69-C78.

The protein belongs to the conotoxin O1 superfamily. In terms of tissue distribution, expressed by the venom duct.

It localises to the secreted. The chain is Conotoxin Leo-O4 from Conus leopardus (Leopard cone).